Here is a 153-residue protein sequence, read N- to C-terminus: 6,7-dimethyl-8-ribityllumazine synthase (153 aa).

5-amino-6-(D-ribitylamino)uracil-binding positions include phenylalanine 21, 55-57, and 79-81; these read AFE and TVI. Residue 84–85 coordinates (2S)-2-hydroxy-3-oxobutyl phosphate; the sequence is AT. The Proton donor role is filled by histidine 87. Phenylalanine 112 contacts 5-amino-6-(D-ribitylamino)uracil. A (2S)-2-hydroxy-3-oxobutyl phosphate-binding site is contributed by arginine 126.

The protein belongs to the DMRL synthase family. Forms an icosahedral capsid composed of 60 subunits, arranged as a dodecamer of pentamers.

The catalysed reaction is (2S)-2-hydroxy-3-oxobutyl phosphate + 5-amino-6-(D-ribitylamino)uracil = 6,7-dimethyl-8-(1-D-ribityl)lumazine + phosphate + 2 H2O + H(+). Its pathway is cofactor biosynthesis; riboflavin biosynthesis; riboflavin from 2-hydroxy-3-oxobutyl phosphate and 5-amino-6-(D-ribitylamino)uracil: step 1/2. Catalyzes the formation of 6,7-dimethyl-8-ribityllumazine by condensation of 5-amino-6-(D-ribitylamino)uracil with 3,4-dihydroxy-2-butanone 4-phosphate. This is the penultimate step in the biosynthesis of riboflavin. The protein is 6,7-dimethyl-8-ribityllumazine synthase of Bacillus cereus (strain G9842).